The chain runs to 1451 residues: DNA excision repair protein ERCC-6-like (1451 aa).

The TPR 1 repeat unit spans residues 27 to 60; sequence YDRYRQKGKEAALNGELPRALELFQLAYQLQPSE. A Helicase ATP-binding domain is found at 118–286; that stretch reads SLYRDGRKGG…WALFDFACQG (169 aa). Residue 131-138 coordinates ATP; the sequence is DDMGLGKT. Residues 237–240 carry the DEAH box motif; sequence DEAH. In terms of domain architecture, Helicase C-terminal spans 479–639; that stretch reads FVVSLMECLR…PFRYFSKQEL (161 aa). Disordered regions lie at residues 647–669, 778–804, 935–1006, 1035–1054, 1063–1083, 1096–1140, and 1182–1343; these read DTRS…RSDT, NSFD…ETAS, DDTS…ATTD, DEEV…EFQL, LEEP…NYND, RSTP…LTSS, and LLEN…SAEL. Acidic residues predominate over residues 781–804; sequence DEPEFEEDEQNLPSAEDAEMETAS. Composition is skewed to polar residues over residues 944–964 and 992–1002; these read SDFN…SPSL and QVLSSPLSQHE. Position 961 is a phosphoserine (Ser-961). Positions 1035–1050 are enriched in acidic residues; it reads DEEVHEVEESAAEESP. The span at 1063-1074 shows a compositional bias: basic and acidic residues; that stretch reads LEEPSINHDKQN. A compositionally biased stretch (acidic residues) spans 1121-1132; that stretch reads DTEEEEEEEEES. A compositionally biased stretch (polar residues) spans 1213 to 1230; the sequence is VQTSSGDNSKSYETSEAN. Over residues 1244 to 1278 the composition is skewed to basic and acidic residues; it reads YREGKNTSDKVSESNETHSEEFAEEEKPSGDKSES. Over residues 1310–1341 the composition is skewed to acidic residues; that stretch reads SEADESVVEEEEPSGETLNTEESEMGEEEESA. The stretch at 1402–1435 is one TPR 2 repeat; sequence YNLLVLSGKQSLAEGRKQEALDFFLKAIDINTGD.

This sequence belongs to the SNF2/RAD54 helicase family.

The protein localises to the chromosome. The protein resides in the centromere. It localises to the kinetochore. The enzyme catalyses ATP + H2O = ADP + phosphate + H(+). In terms of biological role, DNA helicase that acts as a tension sensor that associates with catenated DNA which is stretched under tension until it is resolved during anaphase. Functions as ATP-dependent DNA translocase. Can promote Holliday junction branch migration (in vitro). This Danio rerio (Zebrafish) protein is DNA excision repair protein ERCC-6-like (ercc6l).